Here is a 635-residue protein sequence, read N- to C-terminus: Transaminated amino acid decarboxylase (635 aa).

A Glycyl lysine isopeptide (Lys-Gly) (interchain with G-Cter in ubiquitin) cross-link involves residue Lys-588.

This sequence belongs to the TPP enzyme family. The cofactor is Mg(2+). Thiamine diphosphate serves as cofactor.

The protein resides in the cytoplasm. The enzyme catalyses 4-methyl-2-oxopentanoate + H(+) = 3-methylbutanal + CO2. It carries out the reaction (S)-3-methyl-2-oxopentanoate + H(+) = 2-methylbutanal + CO2. It catalyses the reaction indole-3-pyruvate + H(+) = indole-3-acetaldehyde + CO2. The catalysed reaction is 3-phenylpyruvate + H(+) = 2-phenylacetaldehyde + CO2. The enzyme catalyses 4-methylsulfanyl-2-oxobutanoate + H(+) = 3-methylsulfanylpropanal + CO2. It carries out the reaction 3-(4-hydroxyphenyl)pyruvate + H(+) = (4-hydroxyphenyl)acetaldehyde + CO2. It functions in the pathway amino-acid degradation; Ehrlich pathway. Functionally, one of five 2-oxo acid decarboxylases (PDC1, PDC5, PDC6, ARO10, and THI3) involved in amino acid catabolism. The enzyme catalyzes the decarboxylation of amino acids, which, in a first step, have been transaminated to the corresponding 2-oxo acids (alpha-keto-acids). In a third step, the resulting aldehydes are reduced to alcohols, collectively referred to as fusel oils or alcohols. Its preferred substrates are the transaminated amino acids derived from phenylalanine (phenylpyruvate), tryptophan (3-(indol-3-yl)pyruvate), and probably tyrosine (4-hydroxyphenylpyruvate), but also isoleucine ((3S)-3-methyl-2-oxopentanoate, also alpha-keto-beta-methylvalerate) and methionine (4-methylthio-2-oxobutanoate), whereas transaminated leucine (4-methyl-2-oxopentanoate, also alpha-keto-isocaproate) is a low efficiency substrate and transaminated valine and pyruvate are no substrates. In analogy to the pyruvate decarboxylases the enzyme may in a side-reaction catalyze condensation (or carboligation) reactions leading to the formation of 2-hydroxy ketone, collectively called acyloins. The sequence is that of Transaminated amino acid decarboxylase (ARO10) from Saccharomyces cerevisiae (strain ATCC 204508 / S288c) (Baker's yeast).